The primary structure comprises 418 residues: Actin-like protein 7B (418 aa).

The disordered stretch occupies residues 1-42; it reads MATKNSPSPKPMGTAQGDPGEAGTLPAPEAAGIRDTGSTQLK. A Phosphoserine modification is found at Ser-8.

This sequence belongs to the actin family. In terms of tissue distribution, testis specific.

Its subcellular location is the cytoplasm. It is found in the cytoskeleton. This Mus musculus (Mouse) protein is Actin-like protein 7B (Actl7b).